The chain runs to 115 residues: Replication initiation control protein YabA (115 aa).

The Zn(2+) site is built by histidine 85, cysteine 87, cysteine 101, and cysteine 104.

Belongs to the YabA family. As to quaternary structure, homotetramer. Interacts with both DnaA and DnaN, acting as a bridge between these two proteins. The cofactor is Zn(2+).

Its subcellular location is the cytoplasm. The protein resides in the nucleoid. Functionally, involved in control of chromosome replication initiation. Inhibits the cooperative binding of DnaA to the oriC region, thus negatively regulating initiation of chromosome replication. Inhibits the ability of DnaA-ATP to form a helix on DNA; does not disassemble preformed DnaA-DNA helices. Decreases the residence time of DnaA on the chromosome at its binding sites (oriC, replication forks and promoter-binding sites). Tethers DnaA to the replication machinery via the DNA polymerase beta sliding clamp subunit (dnaN). Associates with oriC and other DnaA targets on the chromosome in a DnaA-dependent manner. In Lactiplantibacillus plantarum (strain ATCC BAA-793 / NCIMB 8826 / WCFS1) (Lactobacillus plantarum), this protein is Replication initiation control protein YabA.